The sequence spans 132 residues: Large ribosomal subunit protein bL20c (132 aa).

The protein belongs to the bacterial ribosomal protein bL20 family.

Its subcellular location is the plastid. It is found in the chloroplast. Its function is as follows. Binds directly to 23S ribosomal RNA and is necessary for the in vitro assembly process of the 50S ribosomal subunit. It is not involved in the protein synthesizing functions of that subunit. This chain is Large ribosomal subunit protein bL20c, found in Coffea arabica (Arabian coffee).